The following is a 142-amino-acid chain: Sorting nexin-3 (142 aa).

Residues 21–138 (NFLEIEVRNP…ASFIQDPNWD (118 aa)) form the PX domain. A 1,2-diacyl-sn-glycero-3-phospho-(1D-myo-inositol-3-phosphate) is bound by residues R64, S66, K90, R95, and R104.

The protein belongs to the sorting nexin family.

The protein resides in the cytoplasm. Its subcellular location is the golgi apparatus membrane. It is found in the prevacuolar compartment membrane. Required for retention of late Golgi membrane proteins. Component of the retrieval machinery that functions by direct interaction with the cytosolic tails of certain TGN membrane proteins during the sorting/budding process at the prevacuolar compartment. Binds phosphatidylinositol 3-phosphate (PtdIns(P3)). The polypeptide is Sorting nexin-3 (snx3) (Aspergillus fumigatus (strain ATCC MYA-4609 / CBS 101355 / FGSC A1100 / Af293) (Neosartorya fumigata)).